We begin with the raw amino-acid sequence, 184 residues long: Gremlin-1 (184 aa).

The signal sequence occupies residues 1–24; that stretch reads MNRTAYTVGALLLLLGTLLPTAEG. The disordered stretch occupies residues 23 to 77; sequence EGKKKGSQGAIPPPDKAQHNDSEQTQSPPQPGSRTRGRGQGRGTAMPGEEVLESS. N-linked (GlcNAc...) asparagine glycosylation is present at asparagine 42. Intrachain disulfides connect cysteine 94–cysteine 144, cysteine 108–cysteine 158, cysteine 118–cysteine 176, and cysteine 122–cysteine 178. Residues 94 to 184 enclose the CTCK domain; that stretch reads CKTQPLKQTI…QCRCISIDLD (91 aa).

This sequence belongs to the DAN family. As to quaternary structure, homodimer; can also form homooligomers. Interacts with BMP2; can form higher oligomers with BMP2. Interacts with SLIT1 and SLIT2 in a glycosylation-dependent manner. As to expression, highly expressed in spleen and to a lesser extent in lung, skeletal muscle and kidney. Expressed only in non-transformed cells or primary fibroblasts in culture but not in established transformed or tumor derived cell lines. Broadly expressed in limb bud mesenchyme but restricted to the distal limb bud mesenchyme and concentrated posteriorly. Expressed in ovary especially in granulosa cells of follicles of type 4.

Its subcellular location is the secreted. In terms of biological role, cytokine that may play an important role during carcinogenesis and metanephric kidney organogenesis, as BMP a antagonist required for early limb outgrowth and patterning in maintaining the FGF4-SHH feedback loop. Down-regulates the BMP4 signaling in a dose-dependent manner. Antagonist of BMP2; inhibits BMP2-mediated differentiation of osteoblasts (in vitro). Acts as inhibitor of monocyte chemotaxis. This Mus musculus (Mouse) protein is Gremlin-1 (Grem1).